Reading from the N-terminus, the 225-residue chain is Probable manganese catalase (225 aa).

Glutamate 37 is a binding site for Mn(2+). Residues aspartate 58 and aspartate 62 each coordinate Ca(2+). 4 residues coordinate Mn(2+): glutamate 67, histidine 70, glutamate 138, and histidine 171. Serine 204 serves as a coordination point for Ca(2+). The interval 204–225 (STPGRYVQDPNPTEPSFSNPRR) is disordered. Over residues 213–225 (PNPTEPSFSNPRR) the composition is skewed to polar residues.

The protein belongs to the manganese catalase family. It depends on Ca(2+) as a cofactor. Mn(2+) is required as a cofactor.

It carries out the reaction 2 H2O2 = O2 + 2 H2O. Catalyzes the decomposition of hydrogen peroxide into water and oxygen. The sequence is that of Probable manganese catalase from Clostridium acetobutylicum (strain ATCC 824 / DSM 792 / JCM 1419 / IAM 19013 / LMG 5710 / NBRC 13948 / NRRL B-527 / VKM B-1787 / 2291 / W).